Reading from the N-terminus, the 169-residue chain is MDKLDIVLYPDEGLREVCKPVPEMTDELDKLIDEMFYTMYDAPGIGLAAPQVAVQQRLIVVDISETKDEPIALLNPEIIKTAGKITWEEGCLSIPGIYAKVDRPSDILVRGMDRDGKTIEFEANELLAVCIQHEIDHLNGKLFIDHLSGLKRTRAIQKFKKEMAEQANS.

Residues Cys91 and His133 each contribute to the Fe cation site. The active site involves Glu134. His137 provides a ligand contact to Fe cation.

It belongs to the polypeptide deformylase family. Requires Fe(2+) as cofactor.

It catalyses the reaction N-terminal N-formyl-L-methionyl-[peptide] + H2O = N-terminal L-methionyl-[peptide] + formate. In terms of biological role, removes the formyl group from the N-terminal Met of newly synthesized proteins. Requires at least a dipeptide for an efficient rate of reaction. N-terminal L-methionine is a prerequisite for activity but the enzyme has broad specificity at other positions. The protein is Peptide deformylase of Hydrogenovibrio crunogenus (strain DSM 25203 / XCL-2) (Thiomicrospira crunogena).